The sequence spans 368 residues: 2-aminoethylphosphonate--pyruvate transaminase (368 aa).

Lys-192 bears the N6-(pyridoxal phosphate)lysine mark.

It belongs to the class-V pyridoxal-phosphate-dependent aminotransferase family. PhnW subfamily. Homodimer. It depends on pyridoxal 5'-phosphate as a cofactor.

The catalysed reaction is (2-aminoethyl)phosphonate + pyruvate = phosphonoacetaldehyde + L-alanine. Involved in phosphonate degradation. The protein is 2-aminoethylphosphonate--pyruvate transaminase of Pseudomonas putida (strain ATCC 47054 / DSM 6125 / CFBP 8728 / NCIMB 11950 / KT2440).